Here is a 66-residue protein sequence, read N- to C-terminus: Conotoxin TsMEKL-03 (66 aa).

The first 9 residues, 1 to 9 (VILLMSTQA), serve as a signal peptide directing secretion. The propeptide occupies 10-38 (LIQSGVEKRSNKIKALSKRKTTAESWWEG). Disulfide bonds link Cys-40–Cys-54, Cys-47–Cys-58, and Cys-53–Cys-63.

This sequence belongs to the conotoxin O2 superfamily. Expressed by the venom duct.

The protein resides in the secreted. The sequence is that of Conotoxin TsMEKL-03 from Conus tessulatus (Tessellate cone).